The primary structure comprises 373 residues: Glutamate 5-kinase (373 aa).

Lys-15 is an ATP binding site. Substrate contacts are provided by Ser-56, Asp-143, and Asn-155. 175-176 is a binding site for ATP; that stretch reads SD. The PUA domain maps to 281-358; sequence KGTLTIDAGA…PDVMTILGIS (78 aa).

It belongs to the glutamate 5-kinase family.

The protein localises to the cytoplasm. The enzyme catalyses L-glutamate + ATP = L-glutamyl 5-phosphate + ADP. It participates in amino-acid biosynthesis; L-proline biosynthesis; L-glutamate 5-semialdehyde from L-glutamate: step 1/2. Catalyzes the transfer of a phosphate group to glutamate to form L-glutamate 5-phosphate. The sequence is that of Glutamate 5-kinase from Bradyrhizobium diazoefficiens (strain JCM 10833 / BCRC 13528 / IAM 13628 / NBRC 14792 / USDA 110).